The following is a 960-amino-acid chain: Lon protease homolog, mitochondrial (960 aa).

The transit peptide at 1-56 (MYRAGALVLRSATLRRTRFLAAHQNFATISSQRSSVLLAKSLESSIGGAGNQKKFY) directs the protein to the mitochondrion. One can recognise a Lon N-terminal domain in the interval 92-352 (VPILAINRYP…IALLLIQKEK (261 aa)). Residues 195 to 250 (PKTDTPLNGRRARGKRAGLPPTPPPTPPLSTPTSAPEASATSPEEKEEKKDPERKG) form a disordered region. Positions 214-224 (PPTPPPTPPLS) are enriched in pro residues. Over residues 225 to 236 (TPTSAPEASATS) the composition is skewed to low complexity. Positions 237–250 (PEEKEEKKDPERKG) are enriched in basic and acidic residues. Residue 505 to 512 (GPPGVGKT) participates in ATP binding. The segment at 712-748 (EQQPEDEQPAATTAISENSDAEPVSTPSDPPTFTPEK) is disordered. One can recognise a Lon proteolytic domain in the interval 773–960 (VTPPGVIMGL…YDELYEHLFQ (188 aa)). Catalysis depends on residues S867 and K910.

This sequence belongs to the peptidase S16 family. Homohexamer or homoheptamer. Organized in a ring with a central cavity.

The protein localises to the mitochondrion matrix. The enzyme catalyses Hydrolysis of proteins in presence of ATP.. Functionally, ATP-dependent serine protease that mediates the selective degradation of misfolded, unassembled or oxidatively damaged polypeptides as well as certain short-lived regulatory proteins in the mitochondrial matrix. May also have a chaperone function in the assembly of inner membrane protein complexes. Participates in the regulation of mitochondrial gene expression and in the maintenance of the integrity of the mitochondrial genome. Binds to mitochondrial DNA in a site-specific manner. This Caenorhabditis briggsae protein is Lon protease homolog, mitochondrial.